The sequence spans 509 residues: Putative Rieske 2Fe-2S iron-sulfur protein YhfW (509 aa).

The Rieske domain maps to lysine 423–aspartate 509. Cysteine 463, histidine 465, cysteine 481, and histidine 484 together coordinate [2Fe-2S] cluster. A disulfide bridge links cysteine 468 with cysteine 483.

This sequence belongs to the Rieske iron-sulfur protein family. The cofactor is [2Fe-2S] cluster.

This chain is Putative Rieske 2Fe-2S iron-sulfur protein YhfW (yhfW), found in Bacillus subtilis (strain 168).